Consider the following 359-residue polypeptide: Histidinol-phosphate aminotransferase (359 aa).

N6-(pyridoxal phosphate)lysine is present on K217.

It belongs to the class-II pyridoxal-phosphate-dependent aminotransferase family. Histidinol-phosphate aminotransferase subfamily. Homodimer. Requires pyridoxal 5'-phosphate as cofactor.

It catalyses the reaction L-histidinol phosphate + 2-oxoglutarate = 3-(imidazol-4-yl)-2-oxopropyl phosphate + L-glutamate. It functions in the pathway amino-acid biosynthesis; L-histidine biosynthesis; L-histidine from 5-phospho-alpha-D-ribose 1-diphosphate: step 7/9. In Salmonella typhimurium (strain LT2 / SGSC1412 / ATCC 700720), this protein is Histidinol-phosphate aminotransferase (hisC).